A 702-amino-acid polypeptide reads, in one-letter code: Polyribonucleotide nucleotidyltransferase (702 aa).

2 residues coordinate Mg(2+): Asp-485 and Asp-491. Residues 552-611 form the KH domain; the sequence is PKTSTLQIDPEKIRDVIGAGGKVINKIIADTGVKIDIKEDGLVYVSSAESEGVKEAVKII. Residues 621-689 form the S1 motif domain; it reads GEIYLGKVTK…SQGRINLSRK (69 aa).

This sequence belongs to the polyribonucleotide nucleotidyltransferase family. Mg(2+) is required as a cofactor.

The protein resides in the cytoplasm. It catalyses the reaction RNA(n+1) + phosphate = RNA(n) + a ribonucleoside 5'-diphosphate. Its function is as follows. Involved in mRNA degradation. Catalyzes the phosphorolysis of single-stranded polyribonucleotides processively in the 3'- to 5'-direction. The protein is Polyribonucleotide nucleotidyltransferase of Clostridium perfringens (strain ATCC 13124 / DSM 756 / JCM 1290 / NCIMB 6125 / NCTC 8237 / Type A).